The primary structure comprises 209 residues: Large ribosomal subunit protein uL3 (209 aa).

Glutamine 150 carries the N5-methylglutamine modification.

It belongs to the universal ribosomal protein uL3 family. Part of the 50S ribosomal subunit. Forms a cluster with proteins L14 and L19. In terms of processing, methylated by PrmB.

Functionally, one of the primary rRNA binding proteins, it binds directly near the 3'-end of the 23S rRNA, where it nucleates assembly of the 50S subunit. In Vibrio vulnificus (strain CMCP6), this protein is Large ribosomal subunit protein uL3.